A 409-amino-acid polypeptide reads, in one-letter code: MAPRLLLLLLAFLRLGTTGPLVQGRGFRSPTVAWPSFFNFNQPQGVQETIQIPNNGSAPLLVDVQVFVSNVFNVDILRYTVSSMLLLRLSWVDTRLAWNASLYPQHAVTLPWDSLWTPGLTIQEALWVDWQDQSPRARVGPDGHVDLYLALTTETNCDFELLHFPRDQSDCNLSFYALSNTVLELEFRAHAVNEIVSVKREYVVWGLETQIPPRQLVPCFQVTLRLQNTALKAIIALLVPGEALLLADMCGGLLPLRATERIAYKVTLLLGYLVFHSSLVQALPSSSSCNPLLIYYFTVLLLLLFISTMETVLLAALQARGHLSARSSPIPTPRGEQQDHGDLGPHPEEAPGVKESRSWAEAADHIFFLVYVVGVVCSQFFFIGFWMWATCKSDPAPGEAIPHGGQPRL.

The N-terminal stretch at 1–18 (MAPRLLLLLLAFLRLGTT) is a signal peptide. The Extracellular segment spans residues 19–233 (GPLVQGRGFR…LRLQNTALKA (215 aa)). N-linked (GlcNAc...) asparagine glycans are attached at residues N55 and N99. A disulfide bond links C157 and C171. A helical transmembrane segment spans residues 234–254 (IIALLVPGEALLLADMCGGLL). Topologically, residues 255-265 (PLRATERIAYK) are cytoplasmic. A helical transmembrane segment spans residues 266–286 (VTLLLGYLVFHSSLVQALPSS). The Extracellular portion of the chain corresponds to 287–296 (SSCNPLLIYY). A helical membrane pass occupies residues 297–317 (FTVLLLLLFISTMETVLLAAL). At 318 to 365 (QARGHLSARSSPIPTPRGEQQDHGDLGPHPEEAPGVKESRSWAEAADH) the chain is on the cytoplasmic side. The disordered stretch occupies residues 325–354 (ARSSPIPTPRGEQQDHGDLGPHPEEAPGVK). Basic and acidic residues predominate over residues 336 to 354 (EQQDHGDLGPHPEEAPGVK). A helical membrane pass occupies residues 366–386 (IFFLVYVVGVVCSQFFFIGFW). The Extracellular portion of the chain corresponds to 387–409 (MWATCKSDPAPGEAIPHGGQPRL).

The protein belongs to the ligand-gated ion channel (TC 1.A.9) family. Post-translationally, glycosylated.

It localises to the cell membrane. The enzyme catalyses Na(+)(in) = Na(+)(out). It catalyses the reaction K(+)(in) = K(+)(out). In terms of biological role, ligand-gated cation channel that allows the movement of sodium and potassium monoatomic cations across cell membranes when activated by zinc (Zn2+), copper (Cu2+), and changes in pH. Could also transport cesium. The polypeptide is Ligand-gated cation channel ZACN (Canis lupus familiaris (Dog)).